The chain runs to 181 residues: Crustacyanin-C1 subunit (181 aa).

3 disulfides stabilise this stretch: Cys-12-Cys-121, Cys-51-Cys-173, and Cys-117-Cys-150.

It belongs to the calycin superfamily. Lipocalin family. Oligomer; Can form dimers (beta-crustacyanin); or complexes of 16 subunits (alpha-crustacyanin). There are five types of subunits: A1, A2, A3, C1 and C2. Found in the carapace.

It is found in the secreted. The protein localises to the extracellular space. Binds the carotenoid astaxanthin (AXT) which provides the blue coloration to the carapace of the lobster. The chain is Crustacyanin-C1 subunit from Homarus gammarus (European lobster).